A 205-amino-acid polypeptide reads, in one-letter code: ATP phosphoribosyltransferase (205 aa).

This sequence belongs to the ATP phosphoribosyltransferase family. Short subfamily.

Its subcellular location is the cytoplasm. It catalyses the reaction 1-(5-phospho-beta-D-ribosyl)-ATP + diphosphate = 5-phospho-alpha-D-ribose 1-diphosphate + ATP. It participates in amino-acid biosynthesis; L-histidine biosynthesis; L-histidine from 5-phospho-alpha-D-ribose 1-diphosphate: step 1/9. In terms of biological role, catalyzes the condensation of ATP and 5-phosphoribose 1-diphosphate to form N'-(5'-phosphoribosyl)-ATP (PR-ATP). Has a crucial role in the pathway because the rate of histidine biosynthesis seems to be controlled primarily by regulation of HisG enzymatic activity. The polypeptide is ATP phosphoribosyltransferase (Thermococcus gammatolerans (strain DSM 15229 / JCM 11827 / EJ3)).